Consider the following 156-residue polypeptide: Small ribosomal subunit protein uS7 (156 aa).

The protein belongs to the universal ribosomal protein uS7 family. Part of the 30S ribosomal subunit. Contacts proteins S9 and S11.

One of the primary rRNA binding proteins, it binds directly to 16S rRNA where it nucleates assembly of the head domain of the 30S subunit. Is located at the subunit interface close to the decoding center, probably blocks exit of the E-site tRNA. This Clavibacter sepedonicus (Clavibacter michiganensis subsp. sepedonicus) protein is Small ribosomal subunit protein uS7.